The sequence spans 325 residues: GMP reductase (325 aa).

Cys174 functions as the Thioimidate intermediate in the catalytic mechanism. 203 to 226 (MIADGGIRTHGDIAKSIRFGASMV) provides a ligand contact to NADP(+).

This sequence belongs to the IMPDH/GMPR family. GuaC type 2 subfamily.

The enzyme catalyses IMP + NH4(+) + NADP(+) = GMP + NADPH + 2 H(+). In terms of biological role, catalyzes the irreversible NADPH-dependent deamination of GMP to IMP. It functions in the conversion of nucleobase, nucleoside and nucleotide derivatives of G to A nucleotides, and in maintaining the intracellular balance of A and G nucleotides. This chain is GMP reductase, found in Staphylococcus carnosus (strain TM300).